Here is a 386-residue protein sequence, read N- to C-terminus: Bifunctional desaturase/conjugase FADX (386 aa).

A disordered region spans residues 1-28 (MGAGGRMSVAPNNSKCEKKESRSVKRVP). 2 helical membrane-spanning segments follow: residues 65–85 (LSFIFYSIATTYFHLLPSPIT) and 87–107 (IAWPVYWAFQGCILTSVWVLG). The Histidine box-1 motif lies at 108–112 (HECGH). Positions 144 to 148 (HRRHH) match the Histidine box-2 motif. 3 helical membrane-spanning segments follow: residues 182-202 (ALTLVATLFIGWPLYLAFNVS), 228-248 (IYISDAMIFVAAYVLYKIAMA), and 250-270 (GLAWLVCIYGVPLLIVNALVV). Positions 318 to 322 (HVIHH) match the Histidine box-3 motif.

It belongs to the fatty acid desaturase type 1 family. In terms of tissue distribution, expressed exclusively in developing seeds.

It is found in the endoplasmic reticulum membrane. The catalysed reaction is a (9Z,12Z)-octadecadienoyl-containing glycerolipid + 2 Fe(II)-[cytochrome b5] + O2 + 2 H(+) = a (9Z,11E,13E)-octadecatrienoyl-containing glycerolipid + 2 Fe(III)-[cytochrome b5] + 2 H2O. It catalyses the reaction (9Z,12Z,15Z)-octadecatrienoyl-containing glycerolipid + 2 Fe(II)-[cytochrome b5] + O2 + 2 H(+) = a (9Z,11E,13E,15Z)-octadecatetraenoyl-containing glycerolipid + 2 Fe(III)-[cytochrome b5] + 2 H2O. The enzyme catalyses a (9Z)-octadecenoyl-containing glycerolipid + 2 Fe(II)-[cytochrome b5] + O2 + 2 H(+) = a (9Z,12E)-octadecadienoyl-containing glycerolipid + 2 Fe(III)-[cytochrome b5] + 2 H2O. It carries out the reaction a (9Z)-hexadecenoyl-containing glycerolipid + 2 Fe(II)-[cytochrome b5] + O2 + 2 H(+) = a (9Z,12E)-hexadecadienoyl-containing glycerolipid + 2 Fe(III)-[cytochrome b5] + 2 H2O. It participates in lipid metabolism; polyunsaturated fatty acid biosynthesis. In terms of biological role, converts linoleic acid to alpha-eleostearic acid (18:3(9Z,11E,13E)) and alpha-linolenic acid to alpha-parinaric acid (18:4(9Z,11E,13E,15Z)). Converts a single cis double bond at carbon 12 to two conjugated trans bonds at positions 11 and 13. Can also act as a 12(E) desaturase when acting on the monounsaturated fatty acids oleate and palmitoleate, stereoselectively introducing a trans double bond. The polypeptide is Bifunctional desaturase/conjugase FADX (Vernicia fordii (Tung)).